We begin with the raw amino-acid sequence, 481 residues long: Trigger factor (481 aa).

Residues 174-261 (GDIAVVGFKG…LKDLKTRELP (88 aa)) enclose the PPIase FKBP-type domain. The segment at 430 to 481 (ENSTVTEKAPEAESDAAKASKPAAAKKDASKAKTAKTSKAKTAKAESESAES) is disordered. The span at 437–447 (KAPEAESDAAK) shows a compositional bias: basic and acidic residues. Residues 462–471 (KTAKTSKAKT) are compositionally biased toward basic residues. Positions 472–481 (AKAESESAES) are enriched in basic and acidic residues.

It belongs to the FKBP-type PPIase family. Tig subfamily.

The protein localises to the cytoplasm. It catalyses the reaction [protein]-peptidylproline (omega=180) = [protein]-peptidylproline (omega=0). Involved in protein export. Acts as a chaperone by maintaining the newly synthesized protein in an open conformation. Functions as a peptidyl-prolyl cis-trans isomerase. The polypeptide is Trigger factor (Synechococcus sp. (strain WH7803)).